The primary structure comprises 603 residues: NADPH-dependent diflavin oxidoreductase 1 (603 aa).

In terms of domain architecture, Flavodoxin-like spans 8 to 152 (VLVLYGSETG…SFVRWTGRLY (145 aa)). FMN contacts are provided by residues 14–19 (SETGNA), 61–64 (STTG), 99–108 (LGDSTYLKFN), and Glu-134. Residues 210 to 457 (PDGWTATLVG…RKPVLSPIHG (248 aa)) form the FAD-binding FR-type domain. FAD-binding positions include Arg-358, 388 to 391 (RDFS), and 429 to 432 (GLCS). NADP(+) contacts are provided by residues Thr-472, 528 to 529 (SR), and 534 to 538 (KIYVQ). FAD is bound at residue Trp-603.

It belongs to the NADPH-dependent diflavin oxidoreductase NDOR1 family. This sequence in the N-terminal section; belongs to the flavodoxin family. In the C-terminal section; belongs to the flavoprotein pyridine nucleotide cytochrome reductase family. Interacts with DRE2; as part of the cytosolic iron-sulfur (Fe-S) protein assembly (CIA) machinery. The cofactor is FAD. Requires FMN as cofactor.

It is found in the cytoplasm. Its subcellular location is the mitochondrion. It carries out the reaction 2 oxidized [2Fe-2S]-[protein] + NADPH = 2 reduced [2Fe-2S]-[protein] + NADP(+) + H(+). Functionally, NADPH-dependent reductase which is a central component of the cytosolic iron-sulfur (Fe-S) protein assembly (CIA) machinery. Transfers electrons from NADPH via its FAD and FMN prosthetic groups to the [2Fe-2S] cluster of DRE2, another key component of the CIA machinery. In turn, this reduced cluster provides electrons for assembly of cytosolic iron-sulfur cluster proteins. Positively controls H(2)O(2)-induced cell death. This is NADPH-dependent diflavin oxidoreductase 1 from Gibberella zeae (strain ATCC MYA-4620 / CBS 123657 / FGSC 9075 / NRRL 31084 / PH-1) (Wheat head blight fungus).